The primary structure comprises 427 residues: Serine protease inhibitor 88Ea (427 aa).

Residues 1 to 18 form the signal peptide; sequence MHILSISLMAVLPAIALA. Residue asparagine 224 is glycosylated (N-linked (GlcNAc...) asparagine).

Belongs to the serpin family. As to expression, expressed in nurse cells and oocytes. Expressed in wings.

The protein localises to the secreted. Functionally, serine protease inhibitor with activity toward trypsin. Negatively regulates the Toll signaling pathway and suppresses the expression of the antifungal peptide drosomycin. Its negative regulation of the Toll signaling pathway also results in the inhibition of the melanization immune response via the phenoloxidase (PPO1) cascade. Essential for unfolding and expansion of the wings after emergence from the pupal case. May regulate the Toll pathway by blocking the proteolysis of the Toll ligand spz. This is Serine protease inhibitor 88Ea from Drosophila melanogaster (Fruit fly).